The sequence spans 267 residues: Matrilysin (267 aa).

Residues 1-20 form the signal peptide; sequence MAAMRLTLFRIVCLLPGCLA. Residues 21-97 constitute a propeptide, activation peptide; it reads LPLSQEAGEV…PRCGVPDVAE (77 aa). Residues 88 to 95 carry the Cysteine switch motif; it reads PRCGVPDV. Cysteine 90 is a Zn(2+) binding site. Aspartate 156 contributes to the Ca(2+) binding site. 2 residues coordinate Zn(2+): histidine 166 and aspartate 168. Aspartate 173, glycine 174, glycine 176, and threonine 178 together coordinate Ca(2+). Histidine 181 serves as a coordination point for Zn(2+). The Ca(2+) site is built by glycine 188, glycine 190, and aspartate 192. Histidine 194 contacts Zn(2+). The Ca(2+) site is built by aspartate 196 and glutamate 199. Histidine 217 is a Zn(2+) binding site. Residue glutamate 218 is part of the active site. Zn(2+) contacts are provided by histidine 221 and histidine 227.

Belongs to the peptidase M10A family. Requires Ca(2+) as cofactor. It depends on Zn(2+) as a cofactor.

The protein localises to the secreted. It localises to the extracellular space. It is found in the extracellular matrix. The catalysed reaction is Cleavage of 14-Ala-|-Leu-15 and 16-Tyr-|-Leu-17 in B chain of insulin. No action on collagen types I, II, IV, V. Cleaves gelatin chain alpha2(I) &gt; alpha1(I).. In terms of biological role, degrades casein, gelatins of types I, III, IV, and V, and fibronectin. Activates procollagenase. The chain is Matrilysin (Mmp7) from Rattus norvegicus (Rat).